The following is a 122-amino-acid chain: LYR motif-containing protein 1 (122 aa).

This sequence belongs to the complex I LYR family. In terms of tissue distribution, high levels in adipose tissue.

The protein localises to the nucleus. Its function is as follows. May promote cell proliferation and inhibition of apoptosis of preadipocytes. The chain is LYR motif-containing protein 1 (LYRM1) from Homo sapiens (Human).